A 432-amino-acid polypeptide reads, in one-letter code: E3 ubiquitin-protein ligase ATL42 (432 aa).

The signal sequence occupies residues Met1 to Ala18. The helical transmembrane segment at Leu37–Tyr57 threads the bilayer. The RING-type; atypical zinc finger occupies Cys123–Arg165.

It belongs to the RING-type zinc finger family. ATL subfamily.

The protein localises to the membrane. The enzyme catalyses S-ubiquitinyl-[E2 ubiquitin-conjugating enzyme]-L-cysteine + [acceptor protein]-L-lysine = [E2 ubiquitin-conjugating enzyme]-L-cysteine + N(6)-ubiquitinyl-[acceptor protein]-L-lysine.. It functions in the pathway protein modification; protein ubiquitination. In terms of biological role, E3 ubiquitin-protein ligase able to catalyze polyubiquitination with ubiquitin-conjugating enzyme E2 UBC8 in vitro. The sequence is that of E3 ubiquitin-protein ligase ATL42 (ATL42) from Arabidopsis thaliana (Mouse-ear cress).